The primary structure comprises 401 residues: MYNVKKDFPIFKNQGDPYVYLDSAATTHKPQCVIDSIVDYYSSSYATVNRALYTASHDITFAHWQVRSKVGSWIGAQYDQEIIFTRGTTSSLNLLAIAANDSWLAGGTVVISEAEHHANLVSWELACQRSGATIKKVRVDDEGMVDCSHLEQLLKQGVQLVSLAHVSNVSGAVLPLPEIAHLVHRYEALFAVDGAQGVGKGPLNLSEWGVDFYAFSGHKLYAPTGIGVLYGKKELLESLPPVEGGGDMVIVYDFEELSYQEPPLRFEAGTPHIAGVLGLGAAIDYLQALPFSITDRLTELTHFLYEQLLTVPGIQIIGPKQGAARGSLCSISIPGVQASDLGFLLDGRGISVRSGHQCSQPAMVRWDLGHVLRASLGIYNEQQDILLFVEALKDILRAYRS.

The residue at position 219 (Lys219) is an N6-(pyridoxal phosphate)lysine. Cys358 (cysteine persulfide intermediate) is an active-site residue.

Belongs to the class-V pyridoxal-phosphate-dependent aminotransferase family. Csd subfamily. The cofactor is pyridoxal 5'-phosphate.

The enzyme catalyses (sulfur carrier)-H + L-cysteine = (sulfur carrier)-SH + L-alanine. Functionally, catalyzes the removal of elemental sulfur and selenium atoms from L-cysteine, L-cystine, L-selenocysteine, and L-selenocystine to produce L-alanine. In Chlamydia trachomatis serovar D (strain ATCC VR-885 / DSM 19411 / UW-3/Cx), this protein is Probable cysteine desulfurase (csd).